We begin with the raw amino-acid sequence, 218 residues long: Small ribosomal subunit protein uS3 (218 aa).

Positions 38–107 (VREYIEKRLK…RVHVNVVEVK (70 aa)) constitute a KH type-2 domain.

Belongs to the universal ribosomal protein uS3 family. As to quaternary structure, part of the 30S ribosomal subunit. Forms a tight complex with proteins S10 and S14.

Binds the lower part of the 30S subunit head. Binds mRNA in the 70S ribosome, positioning it for translation. This Exiguobacterium sibiricum (strain DSM 17290 / CCUG 55495 / CIP 109462 / JCM 13490 / 255-15) protein is Small ribosomal subunit protein uS3.